We begin with the raw amino-acid sequence, 222 residues long: MLFVKERDIVVPGEKLAGNDYIAGRGTFIEEDKIYSSVVGLVSIKGKRIEVIPLQGKYIPKKNDSVIGKVVDVKFARWIVDIRSPYSAILPVSEVIDKGKKNLEEIFGIGDTLFLKIIEVDEVKKVKLGLHEGGPIKLEGGTLAYITPSKVPRVIGRKGSMIKMLKKLTNCEILLGQNGVIWVKGDKKMEEIVKRALEMIDREAHTSGLTDRVKEFIIRSIE.

Positions 63–131 constitute an S1 motif domain; it reads NDSVIGKVVD…EVKKVKLGLH (69 aa). Positions 139–200 constitute a KH domain; it reads EGGTLAYITP…EIVKRALEMI (62 aa).

The protein belongs to the RRP4 family. Component of the archaeal exosome complex. Forms a trimer of Rrp4 and/or Csl4 subunits. The trimer associates with a hexameric ring-like arrangement composed of 3 Rrp41-Rrp42 heterodimers.

Its subcellular location is the cytoplasm. Functionally, non-catalytic component of the exosome, which is a complex involved in RNA degradation. Increases the RNA binding and the efficiency of RNA degradation. Confers strong poly(A) specificity to the exosome. This Methanothermus fervidus (strain ATCC 43054 / DSM 2088 / JCM 10308 / V24 S) protein is Exosome complex component Rrp4.